Consider the following 208-residue polypeptide: Na(+)-translocating NADH-quinone reductase subunit D (208 aa).

The next 5 membrane-spanning stretches (helical) occupy residues 42 to 62, 72 to 92, 103 to 123, 131 to 151, and 178 to 198; these read IVMG…ISLV, IIVQ…LLQA, VFVG…AFAM, LIDG…VATV, and NGLF…IWGL.

This sequence belongs to the NqrDE/RnfAE family. As to quaternary structure, composed of six subunits; NqrA, NqrB, NqrC, NqrD, NqrE and NqrF.

The protein localises to the cell inner membrane. It catalyses the reaction a ubiquinone + n Na(+)(in) + NADH + H(+) = a ubiquinol + n Na(+)(out) + NAD(+). In terms of biological role, NQR complex catalyzes the reduction of ubiquinone-1 to ubiquinol by two successive reactions, coupled with the transport of Na(+) ions from the cytoplasm to the periplasm. NqrA to NqrE are probably involved in the second step, the conversion of ubisemiquinone to ubiquinol. In Neisseria gonorrhoeae (strain ATCC 700825 / FA 1090), this protein is Na(+)-translocating NADH-quinone reductase subunit D.